We begin with the raw amino-acid sequence, 160 residues long: CXXC motif containing zinc binding protein (160 aa).

Positions 33, 36, 67, and 70 each coordinate Zn(2+). Ser75 is modified (phosphoserine).

The protein belongs to the UPF0587 family. As to quaternary structure, monomer.

This chain is CXXC motif containing zinc binding protein, found in Homo sapiens (Human).